We begin with the raw amino-acid sequence, 259 residues long: NAD kinase (259 aa).

D49 functions as the Proton acceptor in the catalytic mechanism. NAD(+)-binding positions include 49-50 (DG), R54, 118-119 (NE), D148, A156, 159-164 (TAYNYS), and A183.

The protein belongs to the NAD kinase family. A divalent metal cation serves as cofactor.

Its subcellular location is the cytoplasm. The catalysed reaction is NAD(+) + ATP = ADP + NADP(+) + H(+). Its function is as follows. Involved in the regulation of the intracellular balance of NAD and NADP, and is a key enzyme in the biosynthesis of NADP. Catalyzes specifically the phosphorylation on 2'-hydroxyl of the adenosine moiety of NAD to yield NADP. This is NAD kinase from Xylella fastidiosa (strain Temecula1 / ATCC 700964).